Here is a 429-residue protein sequence, read N- to C-terminus: Carboxypeptidase B (429 aa).

A signal peptide spans 1-15; it reads MKFLLVLALCAVVYA. A Peptidase M14 domain is found at 121-423; the sequence is NYQELEVIDE…EGIVVGARRA (303 aa). His-182 and Glu-185 together coordinate Zn(2+). Residues 182–185, Arg-236, and 256–257 each bind substrate; these read HARE and NR. Residues Cys-250 and Cys-273 are joined by a disulfide bond. A Zn(2+)-binding site is contributed by His-309. Residues 310 to 311 and Tyr-365 each bind substrate; that span reads SF. Glu-387 functions as the Proton donor/acceptor in the catalytic mechanism.

The protein belongs to the peptidase M14 family. The cofactor is Zn(2+).

It is found in the secreted. It carries out the reaction Preferential release of a C-terminal lysine or arginine amino acid.. Its activity is regulated as follows. Highly resistant to inhibition by potato carboxypeptidase inhibitor (PCI). Moderately inhibited by leech carboxypeptidase inhibitor (LCI) and tick carboxypeptidase inhibitor (TCI). Metalloprotease which cleaves a single amino acid from the C-terminal end of polypeptide chains. Shows a strong preference for peptides with a terminal lysine residue. This Helicoverpa zea (Corn earworm moth) protein is Carboxypeptidase B.